The chain runs to 946 residues: Protein translocase subunit SecA (946 aa).

ATP is bound by residues Gln89, 107-111, and Asp508; that span reads GEGKT. The segment at 534 to 569 is disordered; the sequence is PEDSHKPPVPLQRRKDSSVGFGKEENNSKDKKVNHS. Residues 546 to 569 show a composition bias toward basic and acidic residues; that stretch reads RRKDSSVGFGKEENNSKDKKVNHS.

It belongs to the SecA family. Monomer and homodimer. Part of the essential Sec protein translocation apparatus which comprises SecA, SecYEG and auxiliary proteins SecDF. Other proteins may also be involved.

The protein resides in the cell inner membrane. Its subcellular location is the cellular thylakoid membrane. The protein localises to the cytoplasm. The enzyme catalyses ATP + H2O + cellular proteinSide 1 = ADP + phosphate + cellular proteinSide 2.. Part of the Sec protein translocase complex. Interacts with the SecYEG preprotein conducting channel. Has a central role in coupling the hydrolysis of ATP to the transfer of proteins into and across the cell membrane, serving as an ATP-driven molecular motor driving the stepwise translocation of polypeptide chains across the membrane. Functionally, probably participates in protein translocation into and across both the cytoplasmic and thylakoid membranes in cyanobacterial cells. This chain is Protein translocase subunit SecA, found in Prochlorococcus marinus (strain SARG / CCMP1375 / SS120).